The primary structure comprises 62 residues: uncharacterized protein (62 aa).

This is an uncharacterized protein from Schizosaccharomyces pombe (strain 972 / ATCC 24843) (Fission yeast).